The sequence spans 1137 residues: Phytochrome C (1137 aa).

A compositionally biased stretch (low complexity) spans 1-18 (MSSSRSNNRATCSRSSSA). The segment at 1–27 (MSSSRSNNRATCSRSSSARSKHSARVV) is disordered. A GAF domain is found at 217 to 400 (NLSLLCDVLV…VFGIQINKEV (184 aa)). A phytochromobilin-binding site is contributed by C322. PAS domains are found at residues 620–690 (VTNE…LQGI) and 750–824 (IQGD…TKLS). One can recognise a Histidine kinase domain in the interval 904 to 1124 (YIRQELRNPL…IVLVEFPVAQ (221 aa)).

This sequence belongs to the phytochrome family. Homodimer. In terms of processing, contains one covalently linked phytochromobilin chromophore.

In terms of biological role, regulatory photoreceptor which exists in two forms that are reversibly interconvertible by light: the Pr form that absorbs maximally in the red region of the spectrum and the Pfr form that absorbs maximally in the far-red region. Photoconversion of Pr to Pfr induces an array of morphogenic responses, whereas reconversion of Pfr to Pr cancels the induction of those responses. Pfr controls the expression of a number of nuclear genes including those encoding the small subunit of ribulose-bisphosphate carboxylase, chlorophyll A/B binding protein, protochlorophyllide reductase, rRNA, etc. It also controls the expression of its own gene(s) in a negative feedback fashion. The protein is Phytochrome C (PHYC) of Oryza sativa subsp. indica (Rice).